The sequence spans 270 residues: tRNA pseudouridine synthase A (270 aa).

Asp51 (nucleophile) is an active-site residue. Tyr109 provides a ligand contact to substrate.

This sequence belongs to the tRNA pseudouridine synthase TruA family. As to quaternary structure, homodimer.

The enzyme catalyses uridine(38/39/40) in tRNA = pseudouridine(38/39/40) in tRNA. Its function is as follows. Formation of pseudouridine at positions 38, 39 and 40 in the anticodon stem and loop of transfer RNAs. The polypeptide is tRNA pseudouridine synthase A (Burkholderia mallei (strain ATCC 23344)).